The following is a 418-amino-acid chain: UDP-N-acetylglucosamine 1-carboxyvinyltransferase (418 aa).

Phosphoenolpyruvate is bound at residue 23–24 (KN). Arginine 93 contacts UDP-N-acetyl-alpha-D-glucosamine. Catalysis depends on aspartate 117, which acts as the Proton donor. 2 residues coordinate UDP-N-acetyl-alpha-D-glucosamine: aspartate 305 and valine 327.

The protein belongs to the EPSP synthase family. MurA subfamily.

Its subcellular location is the cytoplasm. The enzyme catalyses phosphoenolpyruvate + UDP-N-acetyl-alpha-D-glucosamine = UDP-N-acetyl-3-O-(1-carboxyvinyl)-alpha-D-glucosamine + phosphate. The protein operates within cell wall biogenesis; peptidoglycan biosynthesis. Cell wall formation. Adds enolpyruvyl to UDP-N-acetylglucosamine. This Mycobacterium leprae (strain TN) protein is UDP-N-acetylglucosamine 1-carboxyvinyltransferase.